We begin with the raw amino-acid sequence, 548 residues long: Glucan 1,4-alpha-maltotetraohydrolase (548 aa).

The first 21 residues, Met-1–Ala-21, serve as a signal peptide directing secretion. Ca(2+) contacts are provided by Asp-22, Gln-23, His-34, Asp-37, and Glu-38. Tyr-99–Phe-100 contacts substrate. Asn-137 is a Ca(2+) binding site. Position 138 (His-138) interacts with substrate. Cys-161 and Cys-171 form a disulfide bridge. Residues Asp-172 and Asp-175 each contribute to the Ca(2+) site. Phe-177–Asp-181 provides a ligand contact to substrate. Asp-183 lines the Ca(2+) pocket. Arg-212 serves as a coordination point for substrate. Asp-214 acts as the Nucleophile in catalysis. Substrate is bound at residue Arg-217–Gly-218. Gly-218 lines the Ca(2+) pocket. Residues Cys-237 and Cys-272 are joined by a disulfide bond. Glu-240 acts as the Proton donor in catalysis. Positions 314 and 326 each coordinate substrate. One can recognise a CBM20 domain in the interval Gly-446–Leu-548. Residues Gln-529 to Ala-542 are compositionally biased toward polar residues. The disordered stretch occupies residues Gln-529 to Leu-548.

Belongs to the glycosyl hydrolase 13 family. In terms of assembly, monomer. Ca(2+) is required as a cofactor.

It is found in the secreted. The enzyme catalyses Hydrolysis of (1-&gt;4)-alpha-D-glucosidic linkages in amylaceous polysaccharides, to remove successive maltotetraose residues from the non-reducing chain ends.. It participates in glycan degradation; starch degradation. In Stutzerimonas stutzeri (Pseudomonas stutzeri), this protein is Glucan 1,4-alpha-maltotetraohydrolase (amyP).